Reading from the N-terminus, the 465-residue chain is ATP synthase subunit beta 2 (465 aa).

Residue 148-155 (GGAGVGKT) coordinates ATP.

The protein belongs to the ATPase alpha/beta chains family. As to quaternary structure, F-type ATPases have 2 components, CF(1) - the catalytic core - and CF(0) - the membrane proton channel. CF(1) has five subunits: alpha(3), beta(3), gamma(1), delta(1), epsilon(1). CF(0) has three main subunits: a(1), b(2) and c(9-12). The alpha and beta chains form an alternating ring which encloses part of the gamma chain. CF(1) is attached to CF(0) by a central stalk formed by the gamma and epsilon chains, while a peripheral stalk is formed by the delta and b chains.

Its subcellular location is the cell inner membrane. It carries out the reaction ATP + H2O + 4 H(+)(in) = ADP + phosphate + 5 H(+)(out). Produces ATP from ADP in the presence of a proton gradient across the membrane. The catalytic sites are hosted primarily by the beta subunits. The polypeptide is ATP synthase subunit beta 2 (Psychromonas ingrahamii (strain DSM 17664 / CCUG 51855 / 37)).